Here is a 179-residue protein sequence, read N- to C-terminus: Ribosome-recycling factor (179 aa).

This sequence belongs to the RRF family.

The protein resides in the cytoplasm. Functionally, responsible for the release of ribosomes from messenger RNA at the termination of protein biosynthesis. May increase the efficiency of translation by recycling ribosomes from one round of translation to another. In Chlamydia muridarum (strain MoPn / Nigg), this protein is Ribosome-recycling factor.